The sequence spans 921 residues: Isoleucine--tRNA ligase (921 aa).

The short motif at 57 to 67 is the 'HIGH' region element; sequence PYANGELHMGH. Residue E552 coordinates L-isoleucyl-5'-AMP. The 'KMSKS' region signature appears at 593-597; that stretch reads KMSKS. An ATP-binding site is contributed by K596. Residues C888, C891, C908, and C911 each contribute to the Zn(2+) site.

It belongs to the class-I aminoacyl-tRNA synthetase family. IleS type 1 subfamily. In terms of assembly, monomer. Requires Zn(2+) as cofactor.

The protein resides in the cytoplasm. The catalysed reaction is tRNA(Ile) + L-isoleucine + ATP = L-isoleucyl-tRNA(Ile) + AMP + diphosphate. Functionally, catalyzes the attachment of isoleucine to tRNA(Ile). As IleRS can inadvertently accommodate and process structurally similar amino acids such as valine, to avoid such errors it has two additional distinct tRNA(Ile)-dependent editing activities. One activity is designated as 'pretransfer' editing and involves the hydrolysis of activated Val-AMP. The other activity is designated 'posttransfer' editing and involves deacylation of mischarged Val-tRNA(Ile). The chain is Isoleucine--tRNA ligase from Listeria monocytogenes serotype 4b (strain F2365).